The sequence spans 314 residues: Homoserine kinase (314 aa).

Residue proline 95–serine 105 coordinates ATP.

The protein belongs to the GHMP kinase family. Homoserine kinase subfamily.

The protein localises to the cytoplasm. It carries out the reaction L-homoserine + ATP = O-phospho-L-homoserine + ADP + H(+). The protein operates within amino-acid biosynthesis; L-threonine biosynthesis; L-threonine from L-aspartate: step 4/5. Catalyzes the ATP-dependent phosphorylation of L-homoserine to L-homoserine phosphate. The chain is Homoserine kinase from Mycobacterium ulcerans (strain Agy99).